A 280-amino-acid polypeptide reads, in one-letter code: C-type lectin domain family 1 member A (280 aa).

A disordered region spans residues 1-44 (MQAKYSSTRDMLDDDGDTTMSLHSQGSATTRHPEPRRTEHRAPS). At 1–52 (MQAKYSSTRDMLDDDGDTTMSLHSQGSATTRHPEPRRTEHRAPSSTWRPVAL) the chain is on the cytoplasmic side. Polar residues predominate over residues 18–30 (TTMSLHSQGSATT). Over residues 31–42 (RHPEPRRTEHRA) the composition is skewed to basic and acidic residues. The helical; Signal-anchor for type II membrane protein transmembrane segment at 53–73 (TLLTLCLVLLIGLAALGLLFF) threads the bilayer. The Extracellular segment spans residues 74–280 (QYYQLSNTGQ…VPPETLGEGD (207 aa)). N-linked (GlcNAc...) asparagine glycans are attached at residues N95 and N169. The region spanning 144–258 (HGDNCYQFYK…CKELKRCVCE (115 aa)) is the C-type lectin domain. Disulfide bonds link C165–C257 and C236–C249.

Expressed preferentially in dendritic cells.

The protein localises to the membrane. The protein is C-type lectin domain family 1 member A (CLEC1A) of Homo sapiens (Human).